Reading from the N-terminus, the 537-residue chain is ESX-2 secretion system protein EccE2 (537 aa).

Residues 31–51 (ALGGQLGAVMAVVVGVALVFV) traverse the membrane as a helical segment.

The protein belongs to the EccE family. Could be part of the ESX-2 / type VII secretion system (T7SS), which is composed of cytosolic and membrane components.

It localises to the cell membrane. The sequence is that of ESX-2 secretion system protein EccE2 (eccE2) from Mycobacterium tuberculosis (strain CDC 1551 / Oshkosh).